We begin with the raw amino-acid sequence, 359 residues long: TGACG-sequence-specific DNA-binding protein TGA-1A (359 aa).

The segment covering 44-54 has biased composition (basic and acidic residues); sequence KRLDNETEDTS. The disordered stretch occupies residues 44-72; the sequence is KRLDNETEDTSHGTVGTSNRYEPETSKPV. Residues 72–135 enclose the bZIP domain; that stretch reads VEKVLRRLAQ…GGVDASQLSY (64 aa). The stretch at 73-125 forms a coiled coil; that stretch reads EKVLRRLAQNREAARKSRLRKKAYVQQLENSKLKLIQLEQELERARKQGMCVG. The segment at 74–94 is basic motif; the sequence is KVLRRLAQNREAARKSRLRKK. The segment at 100 to 114 is leucine-zipper; it reads LENSKLKLIQLEQEL. In terms of domain architecture, DOG1 spans 143–354; it reads TAVFDMEYGH…RVLSSQWATR (212 aa).

The protein belongs to the bZIP family. Binds DNA as a dimer.

Its subcellular location is the nucleus. In terms of biological role, transcriptional activator that binds specifically to the DNA sequence 5'-TGACG-3'. Recognizes ocs elements like the as-1 motif of the cauliflower mosaic virus 35S promoter. Binding to the as-1-like cis elements mediate auxin- and salicylic acid-inducible transcription. Could also bind to the Hex-motif (5'-TGACGTGG-3') another cis-acting element found in plant histone promoters. This is TGACG-sequence-specific DNA-binding protein TGA-1A (TGA1A) from Nicotiana tabacum (Common tobacco).